A 274-amino-acid polypeptide reads, in one-letter code: NH(3)-dependent NAD(+) synthetase (274 aa).

46–53 contacts ATP; sequence GISGGQDS. Aspartate 52 is a Mg(2+) binding site. A deamido-NAD(+)-binding site is contributed by arginine 140. ATP is bound at residue threonine 160. Glutamate 165 is a Mg(2+) binding site. Deamido-NAD(+)-binding residues include lysine 173 and aspartate 180. Residues lysine 189 and threonine 211 each contribute to the ATP site. Deamido-NAD(+) is bound at residue 260–261; the sequence is HK.

It belongs to the NAD synthetase family. Homodimer.

It carries out the reaction deamido-NAD(+) + NH4(+) + ATP = AMP + diphosphate + NAD(+) + H(+). It functions in the pathway cofactor biosynthesis; NAD(+) biosynthesis; NAD(+) from deamido-NAD(+) (ammonia route): step 1/1. In terms of biological role, catalyzes the ATP-dependent amidation of deamido-NAD to form NAD. Uses ammonia as a nitrogen source. The protein is NH(3)-dependent NAD(+) synthetase of Streptococcus pyogenes serotype M2 (strain MGAS10270).